The following is a 397-amino-acid chain: Teichoic acid D-alanine hydrolase (397 aa).

The N-terminal stretch at 1 to 23 (MKFNKVKLVIHACVLLFIIISIA) is a signal peptide.

It is found in the cell membrane. It catalyses the reaction [(4-D-Ala)-(2-GlcNAc)-Rib-ol-P]n-[Gro-P]m-beta-D-ManNAc-(1-&gt;4)-alpha-D-GlcNAc-P-peptidoglycan + n H2O = [(2-GlcNAc)-Rib-ol-P]n-[Gro-P]m-beta-D-ManNAc-(1-&gt;4)-alpha-D-GlcNAc-P-peptidoglycan + n D-alanine.. In terms of biological role, catalyzes the liberation of D-alanyl moieties present on wall teichoic acid (WTA) and lipoteichoic acid (LTA). Affects the methicillin resistance level and autolysis in the presence of Triton X-100 as well as the cell wall structure. The protein is Teichoic acid D-alanine hydrolase (fmtA) of Staphylococcus aureus (strain Mu50 / ATCC 700699).